The following is a 169-amino-acid chain: Sec-independent protein translocase protein TatB (169 aa).

A helical membrane pass occupies residues 2 to 22 (SPGIGMPELLVVLVLALVVVG). The disordered stretch occupies residues 106–169 (NQAETDADKA…AKPVDEIKGR (64 aa)).

It belongs to the TatB family. As to quaternary structure, the Tat system comprises two distinct complexes: a TatABC complex, containing multiple copies of TatA, TatB and TatC subunits, and a separate TatA complex, containing only TatA subunits. Substrates initially bind to the TatABC complex, which probably triggers association of the separate TatA complex to form the active translocon.

It localises to the cell inner membrane. Functionally, part of the twin-arginine translocation (Tat) system that transports large folded proteins containing a characteristic twin-arginine motif in their signal peptide across membranes. Together with TatC, TatB is part of a receptor directly interacting with Tat signal peptides. TatB may form an oligomeric binding site that transiently accommodates folded Tat precursor proteins before their translocation. In Maricaulis maris (strain MCS10) (Caulobacter maris), this protein is Sec-independent protein translocase protein TatB.